The primary structure comprises 589 residues: MGKKSRVKTQKSGTGATATVSPKEILSLTSELLQKCSSPAPGPGKEWEEYVQIRSLVEKIRKKQKGLSVIFDGKREDYFPDLMKWASENGASVEGFEMVNFKEEGFGLRATRDIKAEELFLWVPRKLLMTVESAKNSMLGPLYSQDRILQAMGNITLAFHLLCERANPNSFWQPYIQSLPGEYDTPLYFEEDEVRYLHSTQAIHDVFSQYKNTARQYAYFYKVIQTHPHANKLPLKDSFTYEDYRWAVSSVMTRQNQIPTEDGSRVTLALIPLWDMCNHTNGLITTGYNLEDDRCECVALQDFRAGEQIYIFYGTRSNAEFVIHSGFFFDNNSHDRVKIKLGVSKSDRLYAMKAEVLARAGIPTSSVFALHFTEPPISAQLLAFLRVFCMTEEELKEHLLGENAIDRIFTLGNSEFPVSWDNEVKLWTFLEDRASLLLKTYKTTIEEDKSFLKNHDLSVRATMAIKLRLGEKEILEKAVKSAAVNREYFRKQMEDKAPLPRYEESNLGLLESSVADSSLPLVLRNLEEEVGVQEALAIQAEANENGLVNGERSFPNGTRSEEDLKQEERKRAKGDAKESSSDSTDAVKE.

Positions 1–22 are disordered; the sequence is MGKKSRVKTQKSGTGATATVSP. Residues 10–20 are compositionally biased toward polar residues; it reads QKSGTGATATV. S-adenosyl-L-methionine is bound by residues Arg-75, 104–106, Arg-254, 275–279, and 325–327; these read EGF, DMCNH, and SGF. The SET domain maps to 94–314; the sequence is EGFEMVNFKE…AGEQIYIFYG (221 aa). The residue at position 513 (Ser-513) is a Phosphoserine. The interval 547–589 is disordered; that stretch reads LVNGERSFPNGTRSEEDLKQEERKRAKGDAKESSSDSTDAVKE. Residues 559–589 show a composition bias toward basic and acidic residues; the sequence is RSEEDLKQEERKRAKGDAKESSSDSTDAVKE.

This sequence belongs to the class V-like SAM-binding methyltransferase superfamily. SETD3 actin-histidine methyltransferase family. Interacts with MYOD1. Phosphorylated by GSK3B, which is required for recognition by the SCF(FBXW7) complex and subsequent degradation. Post-translationally, ubiquitinated by the SCF(FBXW7) complex following phosphorylation by GSK3B, leading to its degradation by the proteasome.

It localises to the cytoplasm. The protein localises to the nucleus. It catalyses the reaction L-histidyl-[protein] + S-adenosyl-L-methionine = N(tele)-methyl-L-histidyl-[protein] + S-adenosyl-L-homocysteine + H(+). Protein-histidine N-methyltransferase that specifically mediates 3-methylhistidine (tele-methylhistidine) methylation of actin at 'His-73'. Histidine methylation of actin is required for smooth muscle contraction of the laboring uterus during delivery. Does not have protein-lysine N-methyltransferase activity and probably only catalyzes histidine methylation of actin. In Dasypus novemcinctus (Nine-banded armadillo), this protein is Actin-histidine N-methyltransferase.